Consider the following 251-residue polypeptide: Ubiquinone/menaquinone biosynthesis C-methyltransferase UbiE (251 aa).

Residues Thr74, Asp95, and 123–124 each bind S-adenosyl-L-methionine; that span reads NA.

It belongs to the class I-like SAM-binding methyltransferase superfamily. MenG/UbiE family.

It carries out the reaction a 2-demethylmenaquinol + S-adenosyl-L-methionine = a menaquinol + S-adenosyl-L-homocysteine + H(+). The enzyme catalyses a 2-methoxy-6-(all-trans-polyprenyl)benzene-1,4-diol + S-adenosyl-L-methionine = a 5-methoxy-2-methyl-3-(all-trans-polyprenyl)benzene-1,4-diol + S-adenosyl-L-homocysteine + H(+). Its pathway is quinol/quinone metabolism; menaquinone biosynthesis; menaquinol from 1,4-dihydroxy-2-naphthoate: step 2/2. It functions in the pathway cofactor biosynthesis; ubiquinone biosynthesis. In terms of biological role, methyltransferase required for the conversion of demethylmenaquinol (DMKH2) to menaquinol (MKH2) and the conversion of 2-polyprenyl-6-methoxy-1,4-benzoquinol (DDMQH2) to 2-polyprenyl-3-methyl-6-methoxy-1,4-benzoquinol (DMQH2). This Shewanella pealeana (strain ATCC 700345 / ANG-SQ1) protein is Ubiquinone/menaquinone biosynthesis C-methyltransferase UbiE.